Reading from the N-terminus, the 131-residue chain is Profilin-2 (131 aa).

Belongs to the profilin family. As to quaternary structure, occurs in many kinds of cells as a complex with monomeric actin in a 1:1 ratio.

Its subcellular location is the cytoplasm. It is found in the cytoskeleton. Functionally, binds to actin and affects the structure of the cytoskeleton. At high concentrations, profilin prevents the polymerization of actin, whereas it enhances it at low concentrations. By binding to PIP2, it inhibits the formation of IP3 and DG. This chain is Profilin-2, found in Solanum lycopersicum (Tomato).